The sequence spans 199 residues: Recombination protein RecR (199 aa).

Residues Cys-58–Cys-73 form a C4-type zinc finger. The region spanning Gly-81–Pro-176 is the Toprim domain.

The protein belongs to the RecR family.

Its function is as follows. May play a role in DNA repair. It seems to be involved in an RecBC-independent recombinational process of DNA repair. It may act with RecF and RecO. This is Recombination protein RecR from Nitrosococcus oceani (strain ATCC 19707 / BCRC 17464 / JCM 30415 / NCIMB 11848 / C-107).